The primary structure comprises 338 residues: 3-isopropylmalate dehydrogenase (338 aa).

Substrate-binding residues include R88, R98, R122, and D212. Positions 212, 236, and 240 each coordinate Mg(2+). 272–284 (GSAPDIAGQGIAD) contacts NAD(+).

Belongs to the isocitrate and isopropylmalate dehydrogenases family. LeuB type 2 subfamily. As to quaternary structure, homodimer. The cofactor is Mg(2+). Mn(2+) serves as cofactor.

The protein resides in the cytoplasm. It catalyses the reaction (2R,3S)-3-isopropylmalate + NAD(+) = 4-methyl-2-oxopentanoate + CO2 + NADH. It participates in amino-acid biosynthesis; L-leucine biosynthesis; L-leucine from 3-methyl-2-oxobutanoate: step 3/4. Its function is as follows. Catalyzes the oxidation of 3-carboxy-2-hydroxy-4-methylpentanoate (3-isopropylmalate) to 3-carboxy-4-methyl-2-oxopentanoate. The product decarboxylates to 4-methyl-2 oxopentanoate. In Corynebacterium jeikeium (strain K411), this protein is 3-isopropylmalate dehydrogenase.